Reading from the N-terminus, the 121-residue chain is Small ribosomal subunit protein eS24 (121 aa).

It belongs to the eukaryotic ribosomal protein eS24 family.

This chain is Small ribosomal subunit protein eS24, found in Pyrobaculum aerophilum (strain ATCC 51768 / DSM 7523 / JCM 9630 / CIP 104966 / NBRC 100827 / IM2).